A 144-amino-acid chain; its full sequence is Large ribosomal subunit protein uL15 (144 aa).

Residues 1-57 (MLLNTLSPAAGSKHAPKRLGRGVGSGLGKTGGRGHKGQKSRSGGKVRPGFEGGQMPL) form a disordered region. Gly residues predominate over residues 21-31 (RGVGSGLGKTG). Residues 32–44 (GRGHKGQKSRSGG) show a composition bias toward basic residues.

This sequence belongs to the universal ribosomal protein uL15 family. In terms of assembly, part of the 50S ribosomal subunit.

In terms of biological role, binds to the 23S rRNA. This is Large ribosomal subunit protein uL15 from Vibrio cholerae serotype O1 (strain ATCC 39541 / Classical Ogawa 395 / O395).